A 1263-amino-acid chain; its full sequence is Histone-lysine N-methyltransferase EHMT2 (1263 aa).

Disordered regions lie at residues 1-314 (MRGL…LEEW) and 332-439 (DERV…EYME). Residues 26 to 39 (GRGRGGAHRGRGRP) are compositionally biased toward basic residues. Residue arginine 40 is modified to Asymmetric dimethylarginine. A compositionally biased stretch (basic and acidic residues) spans 83-95 (LEKEPRGAAERVH). Position 97 is a phosphoserine (serine 97). Phosphothreonine is present on threonine 101. A phosphoserine mark is found at serine 104 and serine 193. Lysine 239 carries the N6,N6,N6-trimethyllysine; by EHMT2; alternate modification. Lysine 239 bears the N6,N6-dimethyllysine; by EHMT2; alternate mark. The span at 252-270 (PEKRPPEVQHFRMSDDMHL) shows a compositional bias: basic and acidic residues. Glycyl lysine isopeptide (Lys-Gly) (interchain with G-Cter in SUMO2) cross-links involve residues lysine 272 and lysine 282. Residues serine 285, serine 294, and serine 298 each carry the phosphoserine modification. 2 stretches are compositionally biased toward basic and acidic residues: residues 302–312 (ILEKGEPRPLE) and 332–343 (DERVDSDSKSEV). The span at 350–380 (LSEEEEEEEEEEEEEEEEEEEEEEEEEDEES) shows a compositional bias: acidic residues. The span at 391-400 (GRRKAKKKWR) shows a compositional bias: basic residues. 3 positions are modified to phosphoserine: serine 403, serine 465, and serine 466. A Phosphothreonine modification is found at threonine 608. Residues 621 to 647 (LAHDAPGRADTSQPSARMRGHGEPRRP) are disordered. Lysine 687 is covalently cross-linked (Glycyl lysine isopeptide (Lys-Gly) (interchain with G-Cter in SUMO2)). ANK repeat units follow at residues 702 to 731 (FHPR…DPNF), 737 to 766 (SKRT…NINA), 770 to 799 (QQRT…CVYS), 803 to 833 (DGST…DVNA), 837 to 866 (GGWT…DVTL), 870 to 899 (EENI…DLHA), and 903 to 932 (HGDT…NPEL). The segment at 870–872 (EEN) is histone H3K9me binding. One can recognise a Pre-SET domain in the interval 1025–1088 (QHCTCVDDCS…SCKNRVVQSG (64 aa)). 9 residues coordinate Zn(2+): cysteine 1027, cysteine 1029, cysteine 1033, cysteine 1038, cysteine 1040, cysteine 1070, cysteine 1074, cysteine 1076, and cysteine 1080. Positions 1091 to 1208 (VRLQLYRTAK…TGEELGFDYG (118 aa)) constitute an SET domain. Residues 1101 to 1103 (MGW), tyrosine 1138, and 1165 to 1166 (NH) each bind S-adenosyl-L-methionine. Residues 1127–1146 (DAEADVREDDSYLFDLDNKD) form an interaction with histone H3 region. Cysteine 1168 contacts Zn(2+). The interaction with histone H3 stretch occupies residues 1207–1210 (YGDR). Positions 1217 to 1233 (KYFTCQCGSEKCKHSAE) constitute a Post-SET domain. Positions 1221, 1223, and 1228 each coordinate Zn(2+). Serine 1257 bears the Phosphoserine mark. Threonine 1263 is modified (phosphothreonine).

It belongs to the class V-like SAM-binding methyltransferase superfamily. Histone-lysine methyltransferase family. Suvar3-9 subfamily. As to quaternary structure, heterodimer; heterodimerizes with EHMT1/GLP. Interacts with GFI1B and WIZ. Part of the E2F6.com-1 complex in G0 phase composed of E2F6, MGA, MAX, TFDP1, CBX3, BAT8, EHMT1, RING1, RNF2, MBLR, L3MBTL2 and YAF2. Part of a complex composed of TRIM28, HDAC1, HDAC2 and EHMT2. Interacts with UHRF1. Interacts with CDYL. Interacts with REST only in the presence of CDYL. Part of a complex containing at least CDYL, REST, WIZ, SETB1, EHMT1 and EHMT2. Interacts with PRDM9 and CDYL; interaction only takes place when PRDM9 is bound to hotspot DNA. Interacts with SMYD5. Methylated at Lys-239; automethylated. In terms of tissue distribution, ubiquitous.

It is found in the nucleus. The protein localises to the chromosome. The enzyme catalyses N(6)-methyl-L-lysyl(9)-[histone H3] + S-adenosyl-L-methionine = N(6),N(6)-dimethyl-L-lysyl(9)-[histone H3] + S-adenosyl-L-homocysteine + H(+). The catalysed reaction is L-lysyl(9)-[histone H3] + S-adenosyl-L-methionine = N(6)-methyl-L-lysyl(9)-[histone H3] + S-adenosyl-L-homocysteine + H(+). Histone methyltransferase that specifically mono- and dimethylates 'Lys-9' of histone H3 (H3K9me1 and H3K9me2, respectively) in euchromatin. H3K9me represents a specific tag for epigenetic transcriptional repression by recruiting HP1 proteins to methylated histones. Also mediates monomethylation of 'Lys-56' of histone H3 (H3K56me1) in G1 phase, leading to promote interaction between histone H3 and PCNA and regulating DNA replication. Also weakly methylates 'Lys-27' of histone H3 (H3K27me). Also required for DNA methylation, the histone methyltransferase activity is not required for DNA methylation, suggesting that these 2 activities function independently. Probably targeted to histone H3 by different DNA-binding proteins like E2F6, MGA, MAX and/or DP1. May also methylate histone H1. In addition to the histone methyltransferase activity, also methylates non-histone proteins: mediates dimethylation of 'Lys-373' of p53/TP53. Also methylates CDYL, WIZ, ACIN1, DNMT1, HDAC1, ERCC6, KLF12 and itself. The chain is Histone-lysine N-methyltransferase EHMT2 (Ehmt2) from Mus musculus (Mouse).